We begin with the raw amino-acid sequence, 436 residues long: Na(+)/H(+) antiporter NhaA (436 aa).

11 consecutive transmembrane segments (helical) span residues 14-34 (AGGIVLIAATILTLILSNSTW), 59-79 (LHHWINDGLMAVFFFVVGLEL), 95-115 (ALPVIAALGGMLAPALIYHQF), 125-145 (WGIPMATDIAFAIGILVLLAW), 152-172 (IIFLTALAIADDLGAVLVIAI), 176-196 (PALHIKALMIAALLLLALLLF), 214-234 (FWYFVILSGIHATVAGIFLAF), 300-320 (AIQPWVTFAVLPVFALANAGI), 336-356 (IGTCLGLVLGKFLGIGLSSWL), 374-394 (LLGAAWLGGIGFTMSLFIGQL), and 407-427 (LGILLASLIAASIGLLWLFQV).

It belongs to the NhaA Na(+)/H(+) (TC 2.A.33) antiporter family.

It is found in the cell inner membrane. It catalyses the reaction Na(+)(in) + 2 H(+)(out) = Na(+)(out) + 2 H(+)(in). Na(+)/H(+) antiporter that extrudes sodium in exchange for external protons. The sequence is that of Na(+)/H(+) antiporter NhaA from Acidithiobacillus ferrooxidans (strain ATCC 23270 / DSM 14882 / CIP 104768 / NCIMB 8455) (Ferrobacillus ferrooxidans (strain ATCC 23270)).